The sequence spans 249 residues: 5'-nucleotidase SurE (249 aa).

Positions 8, 9, 39, and 91 each coordinate a divalent metal cation.

This sequence belongs to the SurE nucleotidase family. It depends on a divalent metal cation as a cofactor.

It localises to the cytoplasm. It catalyses the reaction a ribonucleoside 5'-phosphate + H2O = a ribonucleoside + phosphate. Its function is as follows. Nucleotidase that shows phosphatase activity on nucleoside 5'-monophosphates. The sequence is that of 5'-nucleotidase SurE from Pseudomonas syringae pv. tomato (strain ATCC BAA-871 / DC3000).